Here is a 286-residue protein sequence, read N- to C-terminus: Beta-lactamase SHV-2 (286 aa).

The signal sequence occupies residues 1 to 21 (MRYIRLCIISLLATLPLAVHA). Residue S66 is the Acyl-ester intermediate of the active site. The cysteines at positions 73 and 119 are disulfide-linked. Catalysis depends on E164, which acts as the Proton acceptor. Residue 230 to 232 (KTG) participates in substrate binding.

It belongs to the class-A beta-lactamase family.

It carries out the reaction a beta-lactam + H2O = a substituted beta-amino acid. Its function is as follows. This enzyme hydrolyzes cefotaxime, ceftazidime and other broad spectrum cephalosporins. This chain is Beta-lactamase SHV-2 (bla), found in Escherichia coli.